Reading from the N-terminus, the 637-residue chain is Chaperone protein HtpG (637 aa).

The a; substrate-binding stretch occupies residues 1-345; that stretch reads MSQQETHGFQ…SNDLPLNVSR (345 aa). The tract at residues 346 to 562 is b; the sequence is EILQDNHITK…EGEMSTQMIK (217 aa). The interval 563–637 is c; sequence LMQAAGQPVP…MNQMLLANMK (75 aa).

Belongs to the heat shock protein 90 family. In terms of assembly, homodimer.

It localises to the cytoplasm. In terms of biological role, molecular chaperone. Has ATPase activity. The sequence is that of Chaperone protein HtpG from Shewanella sp. (strain W3-18-1).